We begin with the raw amino-acid sequence, 95 residues long: UPF0473 protein PEPE_1260 (95 aa).

The protein belongs to the UPF0473 family.

The sequence is that of UPF0473 protein PEPE_1260 from Pediococcus pentosaceus (strain ATCC 25745 / CCUG 21536 / LMG 10740 / 183-1w).